The primary structure comprises 608 residues: MSTNSTRTPLDHIRNFSIVAHIDHGKSTLADRLIQSTGGLAERDMSEQVLDSMDIERERGITIKAQTVRLHYKANNGETYVLNLIDTPGHVDFAYEVSRSLSACEGSLLVVDASQGVEAQTLANVYQAIDNNHELVTVLNKIDLPAAEPERIKEQIEEVIGIDASDAVMISAKTGLGIPDVLEAIVNRLPPPKSDVGENGPLKALLVDSWYDTYLGVMVLVRVIDGVLTKGQQIRMMGSGAKYGVERVGVLTPKMVNVDSLGPGEIGFITASIKEVADTRVGDTITDDKRPTAQALPGFKPAQPVVFCGLFPVDAADFEDLRAAVGKLRLNDASFSFEMESSAALGFGFRCGFLGLLHLEIIQERLEREFNLDLVATAPSVVYEMTLTDGTEKELHNPADMPDVVKIKEIREPWIKATILTPDEYLGGILKLCQDRRGLQTELTYVGNRAMITYELPLNEVVFDFYDRLKSISKGYASFDYNIIDYREGDLVKMSILVNGDPVDALSMLVHRSAADRRGRGMCEKLKELIPPHMFQIPIQAAIGGKVIARETVRALRKDVTAKCYGGDATRKRKLLDKQKEGKKRMRQFGKVEIPQEAFIAALKMNDE.

Residues 11–193 enclose the tr-type G domain; it reads DHIRNFSIVA…AIVNRLPPPK (183 aa). Residues 23–28 and 140–143 each bind GTP; these read DHGKST and NKID.

Belongs to the TRAFAC class translation factor GTPase superfamily. Classic translation factor GTPase family. LepA subfamily.

It localises to the cell inner membrane. The catalysed reaction is GTP + H2O = GDP + phosphate + H(+). Functionally, required for accurate and efficient protein synthesis under certain stress conditions. May act as a fidelity factor of the translation reaction, by catalyzing a one-codon backward translocation of tRNAs on improperly translocated ribosomes. Back-translocation proceeds from a post-translocation (POST) complex to a pre-translocation (PRE) complex, thus giving elongation factor G a second chance to translocate the tRNAs correctly. Binds to ribosomes in a GTP-dependent manner. This chain is Elongation factor 4, found in Agrobacterium fabrum (strain C58 / ATCC 33970) (Agrobacterium tumefaciens (strain C58)).